Consider the following 383-residue polypeptide: Soluble hydrogenase 42 kDa subunit (383 aa).

Lysine 194 carries the N6-(pyridoxal phosphate)lysine modification.

Belongs to the class-V pyridoxal-phosphate-dependent aminotransferase family. In terms of assembly, heterodimer of a large and a small subunit. The cofactor is pyridoxal 5'-phosphate.

It is found in the cytoplasm. In terms of biological role, soluble hydrogenase catalyzes both production and consumption of hydrogen from suitable artificial electron donors or acceptors. This subunit catalyzes the tritium-exchange activity. This Anabaena cylindrica protein is Soluble hydrogenase 42 kDa subunit.